The chain runs to 200 residues: NADH-quinone oxidoreductase subunit B (200 aa).

[4Fe-4S] cluster is bound by residues Cys-78, Cys-79, Cys-144, and Cys-174.

The protein belongs to the complex I 20 kDa subunit family. In terms of assembly, NDH-1 is composed of 14 different subunits. Subunits NuoB, C, D, E, F, and G constitute the peripheral sector of the complex. It depends on [4Fe-4S] cluster as a cofactor.

It localises to the cell membrane. The enzyme catalyses a quinone + NADH + 5 H(+)(in) = a quinol + NAD(+) + 4 H(+)(out). In terms of biological role, NDH-1 shuttles electrons from NADH, via FMN and iron-sulfur (Fe-S) centers, to quinones in the respiratory chain. The immediate electron acceptor for the enzyme in this species is believed to be ubiquinone. Couples the redox reaction to proton translocation (for every two electrons transferred, four hydrogen ions are translocated across the cytoplasmic membrane), and thus conserves the redox energy in a proton gradient. This Dehalococcoides mccartyi (strain ATCC BAA-2100 / JCM 16839 / KCTC 5957 / BAV1) protein is NADH-quinone oxidoreductase subunit B.